The following is a 358-amino-acid chain: Oxidase FUB9 (358 aa).

The region spanning 6 to 350 (SSKPQIFSIQ…SPAHLSILNA (345 aa)) is the FMN hydroxy acid dehydrogenase domain. Residue tyrosine 32 participates in a 2-oxocarboxylate binding. The FMN site is built by serine 114, glutamine 138, and threonine 166. Arginine 175 is an a 2-oxocarboxylate binding site. Position 221 (lysine 221) interacts with FMN. Catalysis depends on histidine 245, which acts as the Proton acceptor. An a 2-oxocarboxylate-binding site is contributed by arginine 248. FMN-binding positions include 276 to 280 (DGGFR) and 299 to 300 (GR).

This sequence belongs to the FMN-dependent alpha-hydroxy acid dehydrogenase family. FMN is required as a cofactor.

It functions in the pathway mycotoxin biosynthesis. Its function is as follows. Oxidase; part of the gene cluster that mediates the biosynthesis of fusaric acid, a mycotoxin with low to moderate toxicity to animals and humans, but with high phytotoxic properties. L-aspartate is suggested as fusaric acid amino acid precursor that is activated and further processed to O-acetyl-L-homoserine by cluster enzymes aspartate kinase FUB3 and homoserine O-acetyltransferase FUB5, as well as enzymes of the primary metabolism. The polyketide synthase (PKS) FUB1 generates the triketide trans-2-hexenal which is presumptively released by the hydrolase FUB4 and linked to the NRPS-bound amino acid precursor by NAD(P)-dependent dehydrogenase FUB6. FUB1, FUB4, and the non-canonical NRPS Fub8 may form an enzyme complex. Further processing of the NRPS-bound intermediate might be carried out by FUB6 and the sulfhydrylase FUB7, enabling a spontaneous electrocyclization to close the carbon backbone of fusaric acid. Dihydrofusaric acid is likely to be released via reduction by the thioester reductase (TR) domain of FUB8 whereupon the final oxidation to fusaric acid may (also) be performed by the FMN-dependent dehydrogenase FUB9. This Gibberella fujikuroi (strain CBS 195.34 / IMI 58289 / NRRL A-6831) (Bakanae and foot rot disease fungus) protein is Oxidase FUB9.